Reading from the N-terminus, the 393-residue chain is MASGRARCTRKLRNWVVEQVESGQFPGVCWDDTAKTMFRIPWKHAGKQDFREDQDAAFFKAWAIFKGKYKEGDTGGPAVWKTRLRCALNKSSEFKEVPERGRMDVAEPYKVYQLLPPGIVSGQPGTQKVPSKRQHSSVSSERKEEEDAMQNCTLSPSVLQDSLNNEEEGASGGAVHSDIGSSSSSSSPEPQEVTDTTEAPFQGDQRSLEFLLPPEPDYSLLLTFIYNGRVVGEAQVQSLDCRLVAEPSGSESSMEQVLFPKPGPLEPTQRLLSQLERGILVASNPRGLFVQRLCPIPISWNAPQAPPGPGPHLLPSNECVELFRTAYFCRDLVRYFQGLGPPPKFQVTLNFWEESHGSSHTPQNLITVKMEQAFARYLLEQTPEQQAAILSLV.

Positions 9-116 (TRKLRNWVVE…EPYKVYQLLP (108 aa)) form a DNA-binding region, IRF tryptophan pentad repeat. Disordered regions lie at residues 120–151 (VSGQ…AMQN) and 163–202 (LNNE…APFQ). A Phosphoserine modification is found at serine 139.

Belongs to the IRF family. Interacts with STAT2 in the cytoplasm. Forms the interferon-stimulated gene factor 3 complex (ISGF3) with the heterodimer STAT1:STAT2; upon stimulation. As to quaternary structure, (Microbial infection) Interacts with measles virus V protein; this interaction prevents the binding of IRF9 to STAT2 and thereby the type I interferon signaling pathway. (Microbial infection) Ubiquitinated by Herpes simplex virus 2 E3 ubiquitin ligase ICP22.

It localises to the cytoplasm. It is found in the nucleus. Its function is as follows. Transcription factor that plays an essential role in anti-viral immunity. It mediates signaling by type I IFNs (IFN-alpha and IFN-beta). Following type I IFN binding to cell surface receptors, Jak kinases (TYK2 and JAK1) are activated, leading to tyrosine phosphorylation of STAT1 and STAT2. IRF9/ISGF3G associates with the phosphorylated STAT1:STAT2 dimer to form a complex termed ISGF3 transcription factor, that enters the nucleus. ISGF3 binds to the IFN stimulated response element (ISRE) to activate the transcription of interferon stimulated genes, which drive the cell in an antiviral state. This chain is Interferon regulatory factor 9 (IRF9), found in Homo sapiens (Human).